The primary structure comprises 326 residues: Tryptophan--tRNA ligase (326 aa).

ATP contacts are provided by residues 11–13 (QPT) and 19–20 (GN). Residues 12-20 (PTGQIHLGN) carry the 'HIGH' region motif. Residue D135 participates in L-tryptophan binding. Residues 147–149 (GED), V186, and 195–199 (KMSKS) contribute to the ATP site. The short motif at 195-199 (KMSKS) is the 'KMSKS' region element.

Belongs to the class-I aminoacyl-tRNA synthetase family. As to quaternary structure, homodimer.

It localises to the cytoplasm. The catalysed reaction is tRNA(Trp) + L-tryptophan + ATP = L-tryptophyl-tRNA(Trp) + AMP + diphosphate + H(+). Functionally, catalyzes the attachment of tryptophan to tRNA(Trp). The polypeptide is Tryptophan--tRNA ligase (Helicobacter pylori (strain ATCC 700392 / 26695) (Campylobacter pylori)).